The primary structure comprises 552 residues: Urocanate hydratase (552 aa).

NAD(+) contacts are provided by residues 48–49, Q126, 172–174, E192, R197, 238–239, 259–263, 269–270, and Y318; these read GG, GMG, NA, QTSAH, and YV. C406 is an active-site residue. G488 contacts NAD(+).

This sequence belongs to the urocanase family. It depends on NAD(+) as a cofactor.

It is found in the cytoplasm. The catalysed reaction is 4-imidazolone-5-propanoate = trans-urocanate + H2O. It participates in amino-acid degradation; L-histidine degradation into L-glutamate; N-formimidoyl-L-glutamate from L-histidine: step 2/3. Catalyzes the conversion of urocanate to 4-imidazolone-5-propionate. This is Urocanate hydratase from Herpetosiphon aurantiacus (strain ATCC 23779 / DSM 785 / 114-95).